Here is a 94-residue protein sequence, read N- to C-terminus: Co-chaperonin GroES (94 aa).

The protein belongs to the GroES chaperonin family. As to quaternary structure, heptamer of 7 subunits arranged in a ring. Interacts with the chaperonin GroEL.

It localises to the cytoplasm. In terms of biological role, together with the chaperonin GroEL, plays an essential role in assisting protein folding. The GroEL-GroES system forms a nano-cage that allows encapsulation of the non-native substrate proteins and provides a physical environment optimized to promote and accelerate protein folding. GroES binds to the apical surface of the GroEL ring, thereby capping the opening of the GroEL channel. This Geobacillus sp. (strain WCH70) protein is Co-chaperonin GroES.